The following is a 128-amino-acid chain: Small ribosomal subunit protein bS6 (128 aa).

The tract at residues 97-128 (TTPSPMMKEEKSRSLTAAPATDEAKPAEAESA) is disordered. Residues 118–128 (DEAKPAEAESA) show a composition bias toward basic and acidic residues.

Belongs to the bacterial ribosomal protein bS6 family.

Its function is as follows. Binds together with bS18 to 16S ribosomal RNA. The sequence is that of Small ribosomal subunit protein bS6 from Aromatoleum aromaticum (strain DSM 19018 / LMG 30748 / EbN1) (Azoarcus sp. (strain EbN1)).